Reading from the N-terminus, the 858-residue chain is Conidiophore development regulator abaA (858 aa).

A disordered region spans residues 1-22; that stretch reads MSSSLYHPRPVLSSQRYTPSPD. The TEA DNA-binding region spans 128 to 221; sequence QKDKGGVWRR…QVVKKFFEDL (94 aa). Residues 500–522 show a composition bias toward basic and acidic residues; the sequence is VEHQRKKEKRTKGDDRKNLDRAG. 2 disordered regions span residues 500 to 535 and 792 to 858; these read VEHQ…GDAA and TGAG…AGGW. Residues 514–521 carry the Nuclear localization signal motif; the sequence is DRKNLDRA. The segment covering 809 to 822 has biased composition (polar residues); sequence SSDQTALWTQSQWA.

Belongs to the TEC1 family.

The protein resides in the nucleus. Its function is as follows. AbaA and wetA are pivotal regulators of conidiophore development and conidium maturation. They act individually and together to regulate their own expression and that of numerous other sporulation-specific genes. Binds to the sequence 5'-CATTCY-3', where Y is a pyrimidine, making both major- and minor-groove contacts. Plays a pivotal role in conidiation by regulating cell cycle pathways and other conidiation-related genes. This is Conidiophore development regulator abaA from Gibberella zeae (strain ATCC MYA-4620 / CBS 123657 / FGSC 9075 / NRRL 31084 / PH-1) (Wheat head blight fungus).